The chain runs to 161 residues: Ragulator complex protein LAMTOR1 (161 aa).

The disordered stretch occupies residues 1–43; it reads MGCCYSSENEDSDQDREERKLLLDPSSPPTKALNGAEPNYHSL. Gly-2 is lipidated: N-myristoyl glycine. 2 S-palmitoyl cysteine lipidation sites follow: Cys-3 and Cys-4. A Glycyl lysine isopeptide (Lys-Gly) (interchain with G-Cter in ubiquitin) cross-link involves residue Lys-20. At Ser-27 the chain carries Phosphoserine. A Glycyl lysine isopeptide (Lys-Gly) (interchain with G-Cter in ubiquitin) cross-link involves residue Lys-31. Phosphoserine is present on residues Ser-42 and Ser-56. Lys-60 is covalently cross-linked (Glycyl lysine isopeptide (Lys-Gly) (interchain with G-Cter in ubiquitin)). Ser-98 is subject to Phosphoserine. Residues Lys-103 and Lys-104 each participate in a glycyl lysine isopeptide (Lys-Gly) (interchain with G-Cter in ubiquitin) cross-link. Residues 121–161 form an interaction with LAMTOR2 and LAMTOR3 region; that stretch reads SEPIPFSDLQQVSRIAAYAYSALSQIRVDAKEELVVQFGIP. At Ser-141 the chain carries Phosphoserine.

The protein belongs to the LAMTOR1 family. As to quaternary structure, part of the Ragulator complex composed of LAMTOR1, LAMTOR2, LAMTOR3, LAMTOR4 and LAMTOR5. LAMTOR4 and LAMTOR5 form a heterodimer that interacts, through LAMTOR1, with a LAMTOR2, LAMTOR3 heterodimer. Interacts with LAMTOR2 and LAMTOR3; the interaction is direct. The Ragulator complex interacts with both the mTORC1 complex and heterodimers constituted of the Rag GTPases RagA/RRAGA, RagB/RRAGB, RagC/RRAGC and RagD/RRAGD; regulated by amino acid availability. The Ragulator complex interacts with SLC38A9; the probable amino acid sensor. Component of the lysosomal folliculin complex (LFC), composed of FLCN, FNIP1 (or FNIP2), RagA/RRAGA or RagB/RRAGB GDP-bound, RagC/RRAGC or RagD/RRAGD GTP-bound, and Ragulator. Associates with the lysosomal V-ATPase complex; interaction promotes the guanine nucleotide exchange factor (GEF) of the Ragulator complex. Interacts with MMP14. Interacts with CDKN1B; prevents the interaction of CDKN1B with RHOA leaving RHOA in a form accessible to activation by ARHGEF2. Interacts with PIP4P1. N-terminal myristoylation and palmitoylation mediates its recruitment to lysosome membranes, thereby promoting localization of the Ragulator complex to lysosomes. N-myristoylation by NMT1 is required for palmitoylation at Cys-3 and Cys-4. May be palmitoylated by ZDHHC3. Post-translationally, ubiquitinated at Lys-60, Lys-103 and Lys-104 by UBE3A, promoting its degradation by the proteasome. Ubiquitination at Lys-20 impairs the association with the lysosomal V-ATPase complex. Deubiquitination at Lys-20 by USP32 promotes the association with the lysosomal V-ATPase complex and subsequent activation of the mTORC1 complex.

It is found in the lysosome membrane. The protein localises to the late endosome membrane. Key component of the Ragulator complex, a multiprotein complex involved in amino acid sensing and activation of mTORC1, a signaling complex promoting cell growth in response to growth factors, energy levels, and amino acids. Activated by amino acids through a mechanism involving the lysosomal V-ATPase, the Ragulator plays a dual role for the small GTPases Rag (RagA/RRAGA, RagB/RRAGB, RagC/RRAGC and/or RagD/RRAGD): it (1) acts as a guanine nucleotide exchange factor (GEF), activating the small GTPases Rag and (2) mediates recruitment of Rag GTPases to the lysosome membrane. Activated Ragulator and Rag GTPases function as a scaffold recruiting mTORC1 to lysosomes where it is in turn activated. LAMTOR1 is directly responsible for anchoring the Ragulator complex to the lysosomal membrane. LAMTOR1 wraps around the other subunits of the Ragulator complex to hold them in place and interacts with the Rag GTPases, thereby playing a key role in the recruitment of the mTORC1 complex to lysosomes. Also involved in the control of embryonic stem cells differentiation via non-canonical RagC/RRAGC and RagD/RRAGD activation: together with FLCN, it is necessary to recruit and activate RagC/RRAGC and RagD/RRAGD at the lysosomes, and to induce exit of embryonic stem cells from pluripotency via non-canonical, mTOR-independent TFE3 inactivation. Also required for late endosomes/lysosomes biogenesis it may regulate both the recycling of receptors through endosomes and the MAPK signaling pathway through recruitment of some of its components to late endosomes. May be involved in cholesterol homeostasis regulating LDL uptake and cholesterol release from late endosomes/lysosomes. May also play a role in RHOA activation. This is Ragulator complex protein LAMTOR1 from Homo sapiens (Human).